A 650-amino-acid chain; its full sequence is Phosphomethylpyrimidine synthase (650 aa).

Residues N241, M270, Y299, H335, 355–357, 396–399, and E435 each bind substrate; these read SRG and DGLR. H439 contacts Zn(2+). Residue Y462 participates in substrate binding. Residue H503 participates in Zn(2+) binding. 3 residues coordinate [4Fe-4S] cluster: C583, C586, and C591.

It belongs to the ThiC family. Homodimer. Requires [4Fe-4S] cluster as cofactor.

It catalyses the reaction 5-amino-1-(5-phospho-beta-D-ribosyl)imidazole + S-adenosyl-L-methionine = 4-amino-2-methyl-5-(phosphooxymethyl)pyrimidine + CO + 5'-deoxyadenosine + formate + L-methionine + 3 H(+). It functions in the pathway cofactor biosynthesis; thiamine diphosphate biosynthesis. Catalyzes the synthesis of the hydroxymethylpyrimidine phosphate (HMP-P) moiety of thiamine from aminoimidazole ribotide (AIR) in a radical S-adenosyl-L-methionine (SAM)-dependent reaction. In Pseudoalteromonas translucida (strain TAC 125), this protein is Phosphomethylpyrimidine synthase.